A 341-amino-acid polypeptide reads, in one-letter code: Fe-S cluster assembly protein DRE2 (341 aa).

The N-terminal SAM-like domain stretch occupies residues 1 to 157 (MNTLLLLHPT…FKKLSSPPTL (157 aa)). A disordered region spans residues 151–171 (LSSPPTLTDSSEADEDEESQL). The linker stretch occupies residues 157–204 (LTDSSEADEDEESQLNEKLKGSKLIYFDESSDDEIIDEDELLRDDDGA). Residues 161-170 (SEADEDEESQ) are compositionally biased toward acidic residues. [2Fe-2S] cluster contacts are provided by Cys-215, Cys-227, Cys-230, and Cys-232. The tract at residues 215–232 (CALPNGKRRKKACKDCTC) is fe-S binding site A. The [4Fe-4S] cluster site is built by Cys-304, Cys-307, Cys-315, and Cys-318. 2 consecutive short sequence motifs (cx2C motif) follow at residues 304-307 (CGSC) and 315-318 (CDGC). The interval 304–318 (CGSCALGDAFRCDGC) is fe-S binding site B.

It belongs to the anamorsin family. Monomer. Interacts with TAH18. Interacts with MIA40. It depends on [2Fe-2S] cluster as a cofactor. The cofactor is [4Fe-4S] cluster.

The protein localises to the cytoplasm. It is found in the mitochondrion intermembrane space. Component of the cytosolic iron-sulfur (Fe-S) protein assembly (CIA) machinery required for the maturation of extramitochondrial Fe-S proteins. Part of an electron transfer chain functioning in an early step of cytosolic Fe-S biogenesis, facilitating the de novo assembly of a [4Fe-4S] cluster on the scaffold complex CFD1-NBP35. Electrons are transferred to DRE2 from NADPH via the FAD- and FMN-containing protein TAH18. TAH18-DRE2 are also required for the assembly of the diferric tyrosyl radical cofactor of ribonucleotide reductase (RNR), probably by providing electrons for reduction during radical cofactor maturation in the catalytic small subunit RNR2. The protein is Fe-S cluster assembly protein DRE2 of Komagataella phaffii (strain GS115 / ATCC 20864) (Yeast).